The following is a 46-amino-acid chain: Large ribosomal subunit protein bL36A (46 aa).

Belongs to the bacterial ribosomal protein bL36 family.

The protein is Large ribosomal subunit protein bL36A of Sodalis glossinidius (strain morsitans).